The chain runs to 637 residues: tRNA uridine 5-carboxymethylaminomethyl modification enzyme MnmG (637 aa).

18 to 23 (GAGHAG) is an FAD binding site. 282–296 (GPRYCPSIEDKIVRF) provides a ligand contact to NAD(+).

Belongs to the MnmG family. Homodimer. Heterotetramer of two MnmE and two MnmG subunits. FAD is required as a cofactor.

It is found in the cytoplasm. Its function is as follows. NAD-binding protein involved in the addition of a carboxymethylaminomethyl (cmnm) group at the wobble position (U34) of certain tRNAs, forming tRNA-cmnm(5)s(2)U34. This Pediococcus pentosaceus (strain ATCC 25745 / CCUG 21536 / LMG 10740 / 183-1w) protein is tRNA uridine 5-carboxymethylaminomethyl modification enzyme MnmG.